Here is a 178-residue protein sequence, read N- to C-terminus: 5,6,7,8-tetrahydromethanopterin hydro-lyase (178 aa).

The active-site Proton donor is His33. 5 residues coordinate substrate: Asp35, Leu64, Lys82, Thr84, and Gln99.

Belongs to the formaldehyde-activating enzyme family.

It localises to the cytoplasm. The catalysed reaction is 5,6,7,8-tetrahydromethanopterin + formaldehyde = 5,10-methylenetetrahydromethanopterin + H2O. Its function is as follows. Catalyzes the condensation of formaldehyde with tetrahydromethanopterin (H(4)MPT) to 5,10-methylenetetrahydromethanopterin. This chain is 5,6,7,8-tetrahydromethanopterin hydro-lyase (faeA), found in Methanosarcina barkeri (strain Fusaro / DSM 804).